We begin with the raw amino-acid sequence, 341 residues long: Outer membrane protein U (341 aa).

The first 21 residues, 1–21 (MNKTLIALAVSAAAVATGAYA), serve as a signal peptide directing secretion.

Belongs to the Gram-negative porin family. Homotrimer.

The protein resides in the cell outer membrane. Forms pores that allow passive diffusion of small molecules across the outer membrane. The polypeptide is Outer membrane protein U (ompU) (Vibrio cholerae serotype O1 (strain ATCC 39315 / El Tor Inaba N16961)).